The chain runs to 82 residues: Delta-ctenitoxin-Pn2c (82 aa).

An N-terminal signal peptide occupies residues 1 to 17 (MKVAILFLSILVLAVAS). A propeptide spanning residues 18-34 (ESIEESRDDFAVEELGR) is cleaved from the precursor. Disulfide bonds link cysteine 37/cysteine 51, cysteine 44/cysteine 57, cysteine 48/cysteine 80, cysteine 50/cysteine 65, and cysteine 59/cysteine 63.

Expressed by the venom gland.

Its subcellular location is the secreted. In terms of biological role, reversible inhibitor of voltage-gated sodium channels (Nav). Delays the fast inactivation kinetics of neuronal-type sodium channels. In vivo, it induces rat penile erection. This effect may be due to the neuronal nitric oxide synthase (NOS1), since one of its selective inhibitor completely abolishes all the toxic effects of the toxin. This toxin also causes scratching, lacrimation, hypersalivation, sweating and agitation followed by spastic paralysis of the anterior and posterior extremities and death at dose levels of 0.24 mg/mouse. It is also insecticidal to the larval and adult forms of the house fly. The sequence is that of Delta-ctenitoxin-Pn2c from Phoneutria nigriventer (Brazilian armed spider).